A 352-amino-acid polypeptide reads, in one-letter code: MLETLRERLLSVQQDFTSGLKTLSDKSKEAKVKSRPRTAPYLPKYSAGLDLLSRYEDTWAALHRRAKECADAGELVDSEVVMLSAHWEKKRTSLAELQEQLQQLPALLQDVESLMASLAHLETSFEEVENHLLHLEDLCGQCELERHKQAHARHLEDYKKSKRKELEAFKAELDTEHAQKILEMEHTQQLKLKERQKFFEEAFQQDMEQYLSTGHLQIAERREPMGSMSSMEVNVDVLEQMDLMDLSDQEALDVFLNSGGEDNTVISPGLEMESNPSQNEMNLQIPNPSESASQPPASPSACTDLDTADAPLIQADEEEVQVDTALVTLNTDRKSTPGVSDDSDQCDSTQDI.

Position 11 is a phosphoserine (S11). Positions 92 to 180 (TSLAELQEQL…AELDTEHAQK (89 aa)) form a coiled coil. Positions 243–256 (LMDLSDQEALDVFL) match the Nuclear export signal motif. Residues 267–352 (SPGLEMESNP…SDQCDSTQDI (86 aa)) form a disordered region. Positions 274–285 (SNPSQNEMNLQI) are enriched in polar residues. The segment covering 286 to 301 (PNPSESASQPPASPSA) has biased composition (low complexity). Residues S340 and S343 each carry the phosphoserine modification.

The protein belongs to the dysbindin family. Interacts (via its coiled coil domain) with KXD1. Interacts with AP3B2, TRIM32, CMYA5, PI4K2 and RNF151. Interacts with the DNA-dependent protein kinase complex DNA-PK; the interaction phosphorylates DTNBP1 in vitro. Interacts directly in this complex with XRCC5 and XRCC6. Interacts with XPO1; the interaction exports DTNBP1 out of the nucleus. Component of the biogenesis of lysosome-related organelles complex 1 (BLOC-1) composed of at least BLOC1S1, BLOC1S2, BLOC1S3, BLOC1S4, BLOC1S5, BLOC1S6, DTNBP1/BLOC1S7 and SNAPIN/BLOC1S8. Interacts directly in the complex with BLOC1S5, BLOC1S6 and SNAPIN/BLOC1S8. The BLOC-1 complex associates with the AP-3 protein complex and membrane protein cargos. This BLOC-1 complex also associates with the BLOC-2 complex in endosomes. Binds to DTNA and DTNB but may not be a physiological binding partner. Interacts with AP3M1. In terms of processing, ubiquitinated by TRIM32. Ubiquitination leads to DTNBP1 degradation. As to expression, detected in hippocampus neurons (at protein level). Ubiquitously expressed. The highest expression is observed in testis, liver, kidney, brain, heart and lung. In the brain, found primarily in axon bundles and axon terminals, notably in the cerebellum and hippocampus. Expressed at lower levels in stomach, small intestine and skeletal muscle, where it is detected at the sarcolemma.

Its subcellular location is the cytoplasm. The protein resides in the cytoplasmic vesicle membrane. It localises to the cytoplasmic vesicle. It is found in the secretory vesicle. The protein localises to the synaptic vesicle membrane. Its subcellular location is the endosome membrane. The protein resides in the melanosome membrane. It localises to the nucleus. It is found in the postsynaptic density. The protein localises to the presynaptic cell membrane. Its subcellular location is the endoplasmic reticulum. In terms of biological role, component of the BLOC-1 complex, a complex that is required for normal biogenesis of lysosome-related organelles (LRO), such as platelet dense granules and melanosomes. In concert with the AP-3 complex, the BLOC-1 complex is required to target membrane protein cargos into vesicles assembled at cell bodies for delivery into neurites and nerve terminals. The BLOC-1 complex, in association with SNARE proteins, is also proposed to be involved in neurite extension. Associates with the BLOC-2 complex to facilitate the transport of TYRP1 independent of AP-3 function. Plays a role in synaptic vesicle trafficking and in neurotransmitter release. Plays a role in the regulation of cell surface exposure of DRD2. May play a role in actin cytoskeleton reorganization and neurite outgrowth. May modulate MAPK8 phosphorylation. Appears to promote neuronal transmission and viability through regulating the expression of SNAP25 and SYN1, modulating PI3-kinase-Akt signaling and influencing glutamatergic release. Regulates the expression of SYN1 through binding to its promoter. Modulates prefrontal cortical activity via the dopamine/D2 pathway. This is Dysbindin (Dtnbp1) from Rattus norvegicus (Rat).